The chain runs to 960 residues: Probable glutamyl endopeptidase, chloroplastic (960 aa).

The transit peptide at Met1 to Met62 directs the protein to the chloroplast. Positions Ser78–Ala98 are disordered. A compositionally biased stretch (polar residues) spans Asn89–Ala98. Active-site charge relay system residues include Ser780, Asp854, and His888. The disordered stretch occupies residues Thr915 to Leu960. Residues Gln924–Asp933 are compositionally biased toward basic and acidic residues.

The protein belongs to the peptidase S9D family.

The protein resides in the plastid. Its subcellular location is the chloroplast stroma. In terms of biological role, serine-type protease active in vitro against the LHCII N-terminal. Cleaves its substrate on the carboxy-side of Glu residues. The sequence is that of Probable glutamyl endopeptidase, chloroplastic (GEP) from Arabidopsis thaliana (Mouse-ear cress).